The sequence spans 282 residues: MLDDRSAIEHHKYSQRLTELERRSAAAQQRQQKKKPPKMHVGNKIRGIKIKRYVSNGERVLKLVVLFSAILLFMLYIISPLSKITTLHVTGNHDLTKEQVEKNANIYPGRFIWGVYLARHQLTKQAIRKNPQIKDLRIKVTGPQSLQISVKENALLGIAVMNNDTYAVLADGQLQRTKNADNGIAYKRFDGHKKVLATTAAQLGKLKLAIRNGISSVSYQPTKEYPDRVIIYMRDGNTVYGDLNTIGDKMGYYPAIAASMKNKGIIDLQVGAYSYDYGSKDK.

At 1–59 (MLDDRSAIEHHKYSQRLTELERRSAAAQQRQQKKKPPKMHVGNKIRGIKIKRYVSNGER) the chain is on the cytoplasmic side. The tract at residues 19 to 41 (ELERRSAAAQQRQQKKKPPKMHV) is disordered. Residues 31-41 (QQKKKPPKMHV) are compositionally biased toward basic residues. The chain crosses the membrane as a helical span at residues 60 to 80 (VLKLVVLFSAILLFMLYIISP). At 81–282 (LSKITTLHVT…YSYDYGSKDK (202 aa)) the chain is on the extracellular side. The 72-residue stretch at 82-153 (SKITTLHVTG…QSLQISVKEN (72 aa)) folds into the POTRA domain.

Belongs to the FtsQ/DivIB family. DivIB subfamily.

It localises to the cell membrane. In terms of biological role, cell division protein that may be involved in stabilizing or promoting the assembly of the division complex. In Limosilactobacillus reuteri (strain ATCC 55730 / SD2112) (Lactobacillus reuteri), this protein is Cell division protein DivIB.